A 261-amino-acid chain; its full sequence is 5-oxoprolinase subunit A (261 aa).

It belongs to the LamB/PxpA family. As to quaternary structure, forms a complex composed of PxpA, PxpB and PxpC.

It carries out the reaction 5-oxo-L-proline + ATP + 2 H2O = L-glutamate + ADP + phosphate + H(+). Functionally, catalyzes the cleavage of 5-oxoproline to form L-glutamate coupled to the hydrolysis of ATP to ADP and inorganic phosphate. The chain is 5-oxoprolinase subunit A from Symbiobacterium thermophilum (strain DSM 24528 / JCM 14929 / IAM 14863 / T).